The primary structure comprises 343 residues: MFIDEAKIRVKAGDGGNGCMAFRREKFVPRGGPSGGDGGRGGDIVMESTQRHNTLLYFRYNPEHKAERGEHGMGSNCTGRDGKDIILKVPVGTVVYNAESGELLHDFQQPDERLIVAHGGRGGRGNQHFATSTHQAPREHEMGYPGEEFTLRLELKVLADIGIVGYPNVGKSTLISRISAAKPKIADYPFTTLEPNLGVVTVGEMPHEETFVVADIPGLIEGAHEGAGLGDRFLRHVERTHLLVHLVDVSDASGRPDPVADYKTIAAELANFGGELEDKPVIVVASKIDSVNPDKLKKLAAMAKRRKLPFYEISAVTGQGVQQLKYAMAERVRELRKQTQIEL.

Positions 1 to 158 constitute an Obg domain; that stretch reads MFIDEAKIRV…FTLRLELKVL (158 aa). The segment at 121–140 is disordered; it reads RGGRGNQHFATSTHQAPREH. The OBG-type G domain occupies 159-333; sequence ADIGIVGYPN…LKYAMAERVR (175 aa). GTP contacts are provided by residues 165-172, 190-194, 215-218, 286-289, and 314-316; these read GYPNVGKS, FTTLE, DIPG, SKID, and SAV. Positions 172 and 192 each coordinate Mg(2+).

Belongs to the TRAFAC class OBG-HflX-like GTPase superfamily. OBG GTPase family. Monomer. Requires Mg(2+) as cofactor.

It localises to the cytoplasm. An essential GTPase which binds GTP, GDP and possibly (p)ppGpp with moderate affinity, with high nucleotide exchange rates and a fairly low GTP hydrolysis rate. Plays a role in control of the cell cycle, stress response, ribosome biogenesis and in those bacteria that undergo differentiation, in morphogenesis control. This chain is GTPase Obg, found in Acidobacterium capsulatum (strain ATCC 51196 / DSM 11244 / BCRC 80197 / JCM 7670 / NBRC 15755 / NCIMB 13165 / 161).